We begin with the raw amino-acid sequence, 350 residues long: Induced myeloid leukemia cell differentiation protein Mcl-1 homolog (350 aa).

Residues Lys-5 and Lys-40 each participate in a glycyl lysine isopeptide (Lys-Gly) (interchain with G-Cter in ubiquitin) cross-link. The tract at residues 104–175 is PEST-like; it reads CASPPEEMEG…PAEEEEDELF (72 aa). Ser-121 is subject to Phosphoserine. Lys-136 is covalently cross-linked (Glycyl lysine isopeptide (Lys-Gly) (interchain with G-Cter in ubiquitin)). The tract at residues 148–170 is disordered; the sequence is GEASSGPGTDGSLPSTPPPAEEE. Ser-159 is subject to Phosphoserine; by GSK3-alpha and GSK3-beta. Ser-162 carries the post-translational modification Phosphoserine. Thr-163 is subject to Phosphothreonine; by MAPK. Glycyl lysine isopeptide (Lys-Gly) (interchain with G-Cter in ubiquitin) cross-links involve residues Lys-194 and Lys-197. The BH3 motif lies at 209–223; it reads ALETLRRVGDGVQRN. Residues 252–272 carry the BH1 motif; it reads HVFSDGVTNWGRIVTLISFGA. The short motif at 304–319 is the BH2 element; it reads DWLVKQRGWDGFVEFF. Residues 328 to 348 traverse the membrane as a helical segment; it reads IRNVLLAFAGVAGVGAGLAYL.

The protein belongs to the Bcl-2 family. Interacts with HIF3A (via C-terminus domain). Interacts with BOK, BIK, BAX, BAK1, and TPT1. Interacts with unphosphorylated BAD. Interacts with BMF, BBC3 and PMAIP1. Interacts with BOP. Interacts with BCL2L11; may sequester BCL2L11 to prevent its pro-apoptotic activity. Interacts with GIMAP5 and HSPA8/HSC70; the interaction between HSPA8 and MCL1 is impaired in the absence of GIMAP5. In terms of processing, cleaved by CASP3 during apoptosis, yielding a pro-apoptotic C-terminal fragment. Rapidly degraded in the absence of phosphorylation in the PEST region. Post-translationally, phosphorylated on Ser-159, by GSK3, in response to IL3/interleukin-3 withdrawal. Phosphorylation at Ser-159 induces ubiquitination and proteasomal degradation, abrogating the anti-apoptotic activity. Treatment with taxol or okadaic acid induces phosphorylation on additional sites. In terms of processing, ubiquitinated. Ubiquitination is induced by phosphorylation at Ser-159. Deubiquitinated by USP20; leading to increased stability.

The protein resides in the membrane. It localises to the cytoplasm. Its subcellular location is the mitochondrion. It is found in the nucleus. The protein localises to the nucleoplasm. Involved in the regulation of apoptosis versus cell survival, and in the maintenance of viability but not of proliferation. Mediates its effects by interactions with a number of other regulators of apoptosis. In Felis catus (Cat), this protein is Induced myeloid leukemia cell differentiation protein Mcl-1 homolog (MCL1).